The following is a 259-amino-acid chain: Dihydroorotate dehydrogenase B (NAD(+)), electron transfer subunit (259 aa).

Residues 3 to 103 (KKQGRLTIVK…LGPLGQGFPL (101 aa)) enclose the FAD-binding FR-type domain. FAD-binding positions include 54–57 (RPIS), 71–73 (IYR), and 78–79 (GT). Cys-222, Cys-227, Cys-230, and Cys-246 together coordinate [2Fe-2S] cluster.

It belongs to the PyrK family. In terms of assembly, heterotetramer of 2 PyrK and 2 PyrD type B subunits. Requires [2Fe-2S] cluster as cofactor. The cofactor is FAD.

It functions in the pathway pyrimidine metabolism; UMP biosynthesis via de novo pathway; orotate from (S)-dihydroorotate (NAD(+) route): step 1/1. Responsible for channeling the electrons from the oxidation of dihydroorotate from the FMN redox center in the PyrD type B subunit to the ultimate electron acceptor NAD(+). This chain is Dihydroorotate dehydrogenase B (NAD(+)), electron transfer subunit, found in Shouchella clausii (strain KSM-K16) (Alkalihalobacillus clausii).